Consider the following 214-residue polypeptide: Dephospho-CoA kinase (214 aa).

A DPCK domain is found at 4 to 204 (IVGLTGGIGS…QRYLQLAQQK (201 aa)). 12-17 (GSGKST) contributes to the ATP binding site.

It belongs to the CoaE family.

The protein localises to the cytoplasm. It catalyses the reaction 3'-dephospho-CoA + ATP = ADP + CoA + H(+). It functions in the pathway cofactor biosynthesis; coenzyme A biosynthesis; CoA from (R)-pantothenate: step 5/5. Catalyzes the phosphorylation of the 3'-hydroxyl group of dephosphocoenzyme A to form coenzyme A. This is Dephospho-CoA kinase from Mannheimia succiniciproducens (strain KCTC 0769BP / MBEL55E).